Consider the following 268-residue polypeptide: Tryptophan synthase alpha chain (268 aa).

Catalysis depends on proton acceptor residues glutamate 49 and aspartate 60.

This sequence belongs to the TrpA family. As to quaternary structure, tetramer of two alpha and two beta chains.

The enzyme catalyses (1S,2R)-1-C-(indol-3-yl)glycerol 3-phosphate + L-serine = D-glyceraldehyde 3-phosphate + L-tryptophan + H2O. It functions in the pathway amino-acid biosynthesis; L-tryptophan biosynthesis; L-tryptophan from chorismate: step 5/5. Its function is as follows. The alpha subunit is responsible for the aldol cleavage of indoleglycerol phosphate to indole and glyceraldehyde 3-phosphate. This chain is Tryptophan synthase alpha chain, found in Shigella boydii serotype 4 (strain Sb227).